Here is a 125-residue protein sequence, read N- to C-terminus: Small ribosomal subunit protein uS13 (125 aa).

A disordered region spans residues 92–125; sequence RRHLPVHGQRTKTNARTRKGPKKTVAGKKKAGKK.

This sequence belongs to the universal ribosomal protein uS13 family. In terms of assembly, part of the 30S ribosomal subunit. Forms a loose heterodimer with protein S19. Forms two bridges to the 50S subunit in the 70S ribosome.

Located at the top of the head of the 30S subunit, it contacts several helices of the 16S rRNA. In the 70S ribosome it contacts the 23S rRNA (bridge B1a) and protein L5 of the 50S subunit (bridge B1b), connecting the 2 subunits; these bridges are implicated in subunit movement. Contacts the tRNAs in the A and P-sites. The sequence is that of Small ribosomal subunit protein uS13 from Saccharopolyspora erythraea (strain ATCC 11635 / DSM 40517 / JCM 4748 / NBRC 13426 / NCIMB 8594 / NRRL 2338).